The chain runs to 233 residues: Apoptosis regulator Bcl-2 (233 aa).

Positions 10–30 match the BH4 motif; sequence DNREIVLKYIHYKLSQRGYDW. The interval 32 to 86 is disordered; it reads AGEDRPPVPPAPAPAAAPAAVAAAGASSHHRPEPPGSAAASEVPPAEGLRPAPPG. A BH3 motif is present at residues 87–101; the sequence is VHLALRQAGDEFSRR. The BH1 motif lies at 130–149; it reads ELFRDGVNWGRIVAFFEFGG. Positions 181 to 196 match the BH2 motif; sequence NWIQDNGGWDAFVELY. Residues 208–228 form a helical membrane-spanning segment; sequence WISLKTILSLVLVGACITLGA.

It belongs to the Bcl-2 family. As to quaternary structure, forms homodimers, and heterodimers with BAX, BAD, BAK and Bcl-X(L). Heterodimerization with BAX requires intact BH1 and BH2 motifs, and is necessary for anti-apoptotic activity. Also interacts with APAF1 and RAF-1. In adult chicken expressed, in thymus, spleen, kidney, heart, ovary and brain, with the highest levels in the thymus. In the embryo, highly levels expressed in all tissues with high levels in the bursa of Fabricius.

It localises to the mitochondrion outer membrane. The protein resides in the nucleus membrane. The protein localises to the endoplasmic reticulum membrane. It is found in the cytoplasm. In terms of biological role, suppresses apoptosis in a variety of cell systems including factor-dependent lymphohematopoietic and neural cells. Regulates cell death by controlling the mitochondrial membrane permeability. Appears to function in a feedback loop system with caspases. Inhibits caspase activity either by preventing the release of cytochrome c from the mitochondria and/or by binding to the apoptosis-activating factor (APAF-1). The sequence is that of Apoptosis regulator Bcl-2 (BCL2) from Gallus gallus (Chicken).